A 250-amino-acid polypeptide reads, in one-letter code: Ditrans,polycis-undecaprenyl-diphosphate synthase ((2E,6E)-farnesyl-diphosphate specific) (250 aa).

Residue Asp-20 is part of the active site. Asp-20 is a Mg(2+) binding site. Substrate-binding positions include 21–24 (GNGR), Trp-25, Arg-33, His-37, and 65–67 (SSE). Asn-68 serves as the catalytic Proton acceptor. Substrate is bound by residues Trp-69, Arg-71, Arg-188, and 194 to 196 (RIS). Glu-207 provides a ligand contact to Mg(2+).

This sequence belongs to the UPP synthase family. In terms of assembly, homodimer. The cofactor is Mg(2+).

It catalyses the reaction 8 isopentenyl diphosphate + (2E,6E)-farnesyl diphosphate = di-trans,octa-cis-undecaprenyl diphosphate + 8 diphosphate. Catalyzes the sequential condensation of isopentenyl diphosphate (IPP) with (2E,6E)-farnesyl diphosphate (E,E-FPP) to yield (2Z,6Z,10Z,14Z,18Z,22Z,26Z,30Z,34E,38E)-undecaprenyl diphosphate (di-trans,octa-cis-UPP). UPP is the precursor of glycosyl carrier lipid in the biosynthesis of bacterial cell wall polysaccharide components such as peptidoglycan and lipopolysaccharide. This is Ditrans,polycis-undecaprenyl-diphosphate synthase ((2E,6E)-farnesyl-diphosphate specific) from Vibrio cholerae serotype O1 (strain ATCC 39315 / El Tor Inaba N16961).